A 941-amino-acid polypeptide reads, in one-letter code: Lysine-specific demethylase 7A (941 aa).

A PHD-type zinc finger spans residues 37-88 (PVYCVCRQPYDVNRFMIECDICKDWFHGSCVGVEEHHAVDIDLYHCPNCAVL). Residues 97 to 114 (RRNWHRHDYTEIDDGSKP) are linker. A JmjC domain is found at 230–386 (FSDTKMSELV…MQLRCYEMEK (157 aa)). Thr279 serves as a coordination point for substrate. 2 residues coordinate Fe cation: His282 and Asp284. Lys299 is a substrate binding site. Position 354 (His354) interacts with Fe cation. Disordered stretches follow at residues 597-633 (QSLY…EHEE), 677-700 (TTEE…KEES), and 819-921 (QDLS…MATA). Ser604 bears the Phosphoserine mark. Composition is skewed to basic and acidic residues over residues 618-633 (MKIE…EHEE) and 685-700 (GDEK…KEES). The span at 834–876 (SEISQRVQSRNYVDSSGSSLQNGKYMQNSNLTSGACQISNGSL) shows a compositional bias: polar residues.

This sequence belongs to the JHDM1 histone demethylase family. JHDM1D subfamily. It depends on Fe(2+) as a cofactor.

It localises to the nucleus. The enzyme catalyses N(6),N(6)-dimethyl-L-lysyl(9)-[histone H3] + 2 2-oxoglutarate + 2 O2 = L-lysyl(9)-[histone H3] + 2 formaldehyde + 2 succinate + 2 CO2. It catalyses the reaction N(6),N(6)-dimethyl-L-lysyl(27)-[histone H3] + 2 2-oxoglutarate + 2 O2 = L-lysyl(27)-[histone H3] + 2 formaldehyde + 2 succinate + 2 CO2. The catalysed reaction is N(6),N(6)-dimethyl-L-lysyl(36)-[histone H3] + 2-oxoglutarate + O2 = N(6)-methyl-L-lysyl(36)-[histone H3] + formaldehyde + succinate + CO2. It carries out the reaction N(6)-methyl-L-lysyl(20)-[histone H4] + 2-oxoglutarate + O2 = L-lysyl(20)-[histone H4] + formaldehyde + succinate + CO2. Its function is as follows. Histone demethylase required for brain development. Specifically demethylates dimethylated 'Lys-9', 'Lys-27' and 'Lys-36' (H3K9me2, H3K27me2, H3K36me2, respectively) of histone H3 and monomethylated histone H4 'Lys-20' residue (H4K20Me1), thereby playing a central role in histone code. Specifically binds trimethylated 'Lys-4' of histone H3 (H3K4me3), affecting histone demethylase specificity: in presence of H3K4me3, it has no demethylase activity toward H3K9me2, while it has high activity toward H3K27me2. Demethylates H3K9me2 in absence of H3K4me3. Has activity toward H4K20Me1 only when nucleosome is used as a substrate and when not histone octamer is used as substrate. The sequence is that of Lysine-specific demethylase 7A (KDM7A) from Homo sapiens (Human).